The chain runs to 526 residues: MRMQAALVGWACTTLCLASCSSAFSHGASTVACDDMQPKHIQAQPQHQDSHHITIHTHRTSYAPGDKIPVTVRSSRDFMGFLLQARRVSDHQIAGTFVLIPPHSKLMTCFQEADAVTHSDKSLKRNLSFVWKAPAQPVGDIKFLLSVVQSYFVYWARIESSVVSQQTHSSAHSDDRMEPRLLMPNLHQRLGDVEGAAPAPRTPITLPQQHTHVFAVALPGAAEEDNLDPVPASIWVTKFPGDAETLSQPSSHTATEGSINQQPSGDSNPTLEPSLEVHRLERLVALKRVSSESFASSLSTHHRTQDDPSFDSLETCLSSDGGEQDKTKASNRTVTQPPLSTVQLTYPQCLWSSETFTGNGVRASNPIPVLQTSGTSGLPAAGDQSEASRASASFLPQSKHKELRAGKGNGEGGVGYPRQTNPRPDIGLEGAQAPLGIQLRTPQLGILLCLSATLGMALAAGLRYLHTQYCHQQTEVSFSEPASDAVARSNSGETVHVRKIGENSFVLVQAEYNWITPSVGSKKTVL.

Positions 1 to 23 (MRMQAALVGWACTTLCLASCSSA) are cleaved as a signal peptide. Positions 24–179 (FSHGASTVAC…SAHSDDRMEP (156 aa)) constitute a Reelin domain. Residues 24 to 443 (FSHGASTVAC…PLGIQLRTPQ (420 aa)) lie on the Extracellular side of the membrane. Disordered regions lie at residues 242 to 272 (DAETLSQPSSHTATEGSINQQPSGDSNPTLE), 294 to 336 (FASS…TVTQ), and 370 to 398 (LQTSGTSGLPAAGDQSEASRASASFLPQS). Positions 245 to 271 (TLSQPSSHTATEGSINQQPSGDSNPTL) are enriched in polar residues. Residues 385 to 396 (SEASRASASFLP) show a composition bias toward polar residues. A helical transmembrane segment spans residues 444-462 (LGILLCLSATLGMALAAGL). The Cytoplasmic segment spans residues 463-526 (RYLHTQYCHQ…PSVGSKKTVL (64 aa)).

Its subcellular location is the membrane. In Homo sapiens (Human), this protein is Reelin domain-containing protein 1.